Consider the following 106-residue polypeptide: Large ribosomal subunit protein uL24 (106 aa).

Positions 84–97 (EKIGRELGAKEKAR) are enriched in basic and acidic residues. The segment at 84–106 (EKIGRELGAKEKARLQKRKAAAK) is disordered.

This sequence belongs to the universal ribosomal protein uL24 family. As to quaternary structure, part of the 50S ribosomal subunit.

Functionally, one of two assembly initiator proteins, it binds directly to the 5'-end of the 23S rRNA, where it nucleates assembly of the 50S subunit. Its function is as follows. One of the proteins that surrounds the polypeptide exit tunnel on the outside of the subunit. This is Large ribosomal subunit protein uL24 from Anaeromyxobacter sp. (strain K).